A 502-amino-acid polypeptide reads, in one-letter code: ATP synthase subunit alpha 1/3 (502 aa).

Position 169–176 (169–176 (GDRQTGKT)) interacts with ATP.

It belongs to the ATPase alpha/beta chains family. In terms of assembly, F-type ATPases have 2 components, CF(1) - the catalytic core - and CF(0) - the membrane proton channel. CF(1) has five subunits: alpha(3), beta(3), gamma(1), delta(1), epsilon(1). CF(0) has three main subunits: a(1), b(2) and c(9-12). The alpha and beta chains form an alternating ring which encloses part of the gamma chain. CF(1) is attached to CF(0) by a central stalk formed by the gamma and epsilon chains, while a peripheral stalk is formed by the delta and b chains.

The protein resides in the cell inner membrane. It catalyses the reaction ATP + H2O + 4 H(+)(in) = ADP + phosphate + 5 H(+)(out). Produces ATP from ADP in the presence of a proton gradient across the membrane. The alpha chain is a regulatory subunit. This Syntrophotalea carbinolica (strain DSM 2380 / NBRC 103641 / GraBd1) (Pelobacter carbinolicus) protein is ATP synthase subunit alpha 1/3.